A 489-amino-acid chain; its full sequence is Aspartyl/glutamyl-tRNA(Asn/Gln) amidotransferase subunit B (489 aa).

The protein belongs to the GatB/GatE family. GatB subfamily. As to quaternary structure, heterotrimer of A, B and C subunits.

The catalysed reaction is L-glutamyl-tRNA(Gln) + L-glutamine + ATP + H2O = L-glutaminyl-tRNA(Gln) + L-glutamate + ADP + phosphate + H(+). It carries out the reaction L-aspartyl-tRNA(Asn) + L-glutamine + ATP + H2O = L-asparaginyl-tRNA(Asn) + L-glutamate + ADP + phosphate + 2 H(+). Its function is as follows. Allows the formation of correctly charged Asn-tRNA(Asn) or Gln-tRNA(Gln) through the transamidation of misacylated Asp-tRNA(Asn) or Glu-tRNA(Gln) in organisms which lack either or both of asparaginyl-tRNA or glutaminyl-tRNA synthetases. The reaction takes place in the presence of glutamine and ATP through an activated phospho-Asp-tRNA(Asn) or phospho-Glu-tRNA(Gln). This chain is Aspartyl/glutamyl-tRNA(Asn/Gln) amidotransferase subunit B, found in Polynucleobacter asymbioticus (strain DSM 18221 / CIP 109841 / QLW-P1DMWA-1) (Polynucleobacter necessarius subsp. asymbioticus).